We begin with the raw amino-acid sequence, 317 residues long: Melanocyte-stimulating hormone receptor (317 aa).

Over Met-1–Glu-37 the chain is Extracellular. An N-linked (GlcNAc...) asparagine glycan is attached at Asn-29. A helical transmembrane segment spans residues Val-38–Ile-63. Over Ala-64–Pro-72 the chain is Cytoplasmic. A helical membrane pass occupies residues Thr-73 to Leu-93. Residues Glu-94–Asn-118 lie on the Extracellular side of the membrane. Residues Val-119–Met-140 form a helical membrane-spanning segment. Over Asp-141–Gln-163 the chain is Cytoplasmic. A helical transmembrane segment spans residues Ala-164–Tyr-183. The Extracellular portion of the chain corresponds to Asp-184–Cys-191. The helical transmembrane segment at Leu-192–Leu-211 threads the bilayer. The Cytoplasmic segment spans residues Ala-212–Ala-240. Residues Val-241–Leu-266 traverse the membrane as a helical segment. The Extracellular portion of the chain corresponds to Cys-267–Asn-279. A helical transmembrane segment spans residues Phe-280–Phe-300. The Cytoplasmic segment spans residues Arg-301 to Trp-317. Cys-315 carries the S-palmitoyl cysteine lipid modification.

The protein belongs to the G-protein coupled receptor 1 family. Interacts with MGRN1, but does not undergo MGRN1-mediated ubiquitination; this interaction competes with GNAS-binding and thus inhibits agonist-induced cAMP production. Interacts with OPN3; the interaction results in a decrease in MC1R-mediated cAMP signaling and ultimately a decrease in melanin production in melanocytes.

Its subcellular location is the cell membrane. In terms of biological role, receptor for MSH (alpha, beta and gamma) and ACTH. The activity of this receptor is mediated by G proteins which activate adenylate cyclase. Mediates melanogenesis, the production of eumelanin (black/brown) and phaeomelanin (red/yellow), via regulation of cAMP signaling in melanocytes. This is Melanocyte-stimulating hormone receptor (MC1R) from Hylobates lar (Lar gibbon).